The following is a 99-amino-acid chain: Meromycolate extension acyl carrier protein (99 aa).

Positions 3–81 (ATQEEIIAGL…DVVAYIQKLE (79 aa)) constitute a Carrier domain. The residue at position 41 (serine 41) is an O-(pantetheine 4'-phosphoryl)serine. Residue lysine 79 forms an Isoglutamyl lysine isopeptide (Lys-Gln) (interchain with Q-Cter in protein Pup) linkage.

Belongs to the acyl carrier protein (ACP) family. Post-translationally, 4'-phosphopantetheine is transferred from CoA to a specific serine of apo-AcpM.

It is found in the cytoplasm. Acyl carrier protein involved in meromycolate extension. The chain is Meromycolate extension acyl carrier protein (acpM) from Mycolicibacterium smegmatis (strain ATCC 700084 / mc(2)155) (Mycobacterium smegmatis).